Here is a 111-residue protein sequence, read N- to C-terminus: Photosystem II reaction center Psb28 protein (111 aa).

Belongs to the Psb28 family. Part of the photosystem II complex.

Its subcellular location is the cellular thylakoid membrane. The chain is Photosystem II reaction center Psb28 protein from Crocosphaera subtropica (strain ATCC 51142 / BH68) (Cyanothece sp. (strain ATCC 51142)).